Reading from the N-terminus, the 53-residue chain is uncharacterized protein (53 aa).

It is found in the mitochondrion matrix. The protein resides in the kinetoplast. This is an uncharacterized protein from Trypanosoma brucei brucei.